The following is a 265-amino-acid chain: HUWE1-associated protein modifying stress responses (265 aa).

4 disordered regions span residues 1-22 (MEDK…HWFS), 145-170 (RNSR…GSSV), 195-218 (VRSS…RRNG), and 240-265 (GTRK…NRMI). Composition is skewed to polar residues over residues 156–170 (VSPN…GSSV) and 195–212 (VRSS…SSNT).

The protein belongs to the TAPR1 family. Oligomer.

It localises to the nucleus. The protein localises to the cytoplasm. Functionally, acts as a central player within a network of stress response pathways promoting cellular adaptability. Functions as a negative regulator of TP53/P53 in the cellular response to telomere erosion and probably also DNA damage. This is HUWE1-associated protein modifying stress responses from Xenopus laevis (African clawed frog).